Here is a 305-residue protein sequence, read N- to C-terminus: Oxygen-dependent coproporphyrinogen-III oxidase (305 aa).

Ser-99 contributes to the substrate binding site. A divalent metal cation-binding residues include His-103 and His-113. His-113 functions as the Proton donor in the catalytic mechanism. A substrate-binding site is contributed by 115–117; sequence NVR. 2 residues coordinate a divalent metal cation: His-152 and His-182. Residues 247 to 282 are important for dimerization; the sequence is YVEFNLVLDRGTLFGLQTGGRTESILMSMPPLARWE. A substrate-binding site is contributed by 265–267; sequence GGR.

It belongs to the aerobic coproporphyrinogen-III oxidase family. Homodimer. A divalent metal cation is required as a cofactor.

The protein resides in the cytoplasm. The enzyme catalyses coproporphyrinogen III + O2 + 2 H(+) = protoporphyrinogen IX + 2 CO2 + 2 H2O. The protein operates within porphyrin-containing compound metabolism; protoporphyrin-IX biosynthesis; protoporphyrinogen-IX from coproporphyrinogen-III (O2 route): step 1/1. Its function is as follows. Involved in the heme biosynthesis. Catalyzes the aerobic oxidative decarboxylation of propionate groups of rings A and B of coproporphyrinogen-III to yield the vinyl groups in protoporphyrinogen-IX. The protein is Oxygen-dependent coproporphyrinogen-III oxidase of Vibrio cholerae serotype O1 (strain M66-2).